We begin with the raw amino-acid sequence, 668 residues long: Protein brown (668 aa).

The Cytoplasmic portion of the chain corresponds to 1–412 (MPMDEGDAQG…TEDLANIRSG (412 aa)). An ABC transporter domain is found at 31–328 (YSFWNECRKQ…FTEGFMQPKN (298 aa)). 63–70 (GGSGAGKT) is a binding site for ATP. A helical membrane pass occupies residues 413–433 (LIGFGFFMTTAVTLSLMYSGV). At 434 to 453 (GGLTQRTVQDVGGSIFMLSN) the chain is on the extracellular side. Residues 454–474 (EMIFTFSYGVTYIFPAALPII) traverse the membrane as a helical segment. The Cytoplasmic portion of the chain corresponds to 475–490 (RREVAEGTYSLSAYYV). A helical transmembrane segment spans residues 491–511 (ALVLSFVPVAFFKGYMFLSVI). Over 512-524 (YASIYYTRGFLLY) the chain is Extracellular. The helical transmembrane segment at 525–545 (ITMGFLMSLSAIAAVGYGVFL) threads the bilayer. At 546–561 (SSLFETDKMASECAAP) the chain is on the cytoplasmic side. The helical transmembrane segment at 562–582 (FDLIFLIFGGTYMNVDSVPLL) threads the bilayer. Topologically, residues 583 to 637 (KYFSLFFYSNEALMYNFWIDIDNIACXVNDEHPCCQTGLEVLQQASFRTADYTFW) are extracellular. A helical transmembrane segment spans residues 638–658 (LDCASLLVVALVFHIVSFTLI). Residues 659-668 (RRYINRSGYY) lie on the Cytoplasmic side of the membrane.

This sequence belongs to the ABC transporter superfamily. ABCG family. Eye pigment precursor importer (TC 3.A.1.204) subfamily. May form a heterodimer with w/white. As to expression, expressed in eyes.

Its subcellular location is the membrane. The catalysed reaction is guanine(out) + ATP + H2O = guanine(in) + ADP + phosphate + H(+). The enzyme catalyses riboflavin(in) + ATP + H2O = riboflavin(out) + ADP + phosphate + H(+). It carries out the reaction (6S)-5,6,7,8-tetrahydrofolate(out) + ATP + H2O = (6S)-5,6,7,8-tetrahydrofolate(in) + ADP + phosphate + H(+). Functionally, ATP-dependent transporter of the ATP-binding cassette (ABC) family which transports various molecules including bioamines, neurotransmitters and metabolic intermediates. In the eye and probably in association with w/white, required for the transport of the eye red pigment precursor, guanine, into pigment cell granules. In Malpighian tubules, involved in guanine uptake. Probably in association with w/white, involved in aging-induced intestinal stem cell proliferation in the midgut by regulating tetrahydrofolate transport. The protein is Protein brown of Drosophila virilis (Fruit fly).